The primary structure comprises 397 residues: MLKTFNSSARSCRAMPRFLPTLCSRLHEKSGFEIRNAVRMHSVGSHTHTHDHGSDKEMLELVKALKKEGKSPELKLAWLGLYSNIGLAAAKGIGGVALQSSILVADAAHQLGDTLSDLVTLATLKICSKKPTQKYPAGFGKWETIGTFTVSGLLVAVSVGIAHSSLSRLYTILFPYAGSEHTHIGHSHNPSQLLFEHPFMALGLIFGSVVLKEWLFRKTRTVAQKTDSNILLANAWHHRADALTGMVSLLALSGTYFLNAPWLDPFFGCLVSIVVFSAGFNSSKKAFLQLLDRAPSEELRIAVTDALLKGEKLPYKIVTILGNAHAMHVIISVPPSFTSQQSSELAQKVEKTVLDAIPALSSCIVTPLSSDSNQVHRWQHLNGSSGEHSHPSHEHTH.

4 helical membrane passes run Trp-142 to Ala-162, Ser-191 to Leu-211, Ala-242 to Leu-258, and Ala-260 to Phe-280.

The protein belongs to the cation diffusion facilitator (CDF) transporter (TC 2.A.4) family. SLC30A subfamily.

Its subcellular location is the membrane. This is an uncharacterized protein from Schizosaccharomyces pombe (strain 972 / ATCC 24843) (Fission yeast).